We begin with the raw amino-acid sequence, 429 residues long: Palmitoyltransferase SWF1 (429 aa).

Residues 1 to 3 lie on the Lumenal side of the membrane; it reads MGT. A helical transmembrane segment spans residues 4–24; sequence IAIIAAVILGISFMTFVAFFG. Topologically, residues 25 to 79 are cytoplasmic; the sequence is RLPALRNTPISFLHRLIWIHLPNGILTVDRTLTNGRLTTSLTRLGRHLWYDQHPT. A helical membrane pass occupies residues 80 to 100; sequence ILIFFFLLLSVGEYLYLPVAW. Residues 101 to 112 are Lumenal-facing; the sequence is PHFSFTHKFFGT. Residues 113–133 form a helical membrane-spanning segment; it reads IAILCPYIFLYLSAYTDPGVI. Topologically, residues 134–201 are cytoplasmic; sequence NAKTHVREMA…CVGANNQRWF (68 aa). Residues 156–206 enclose the DHHC domain; the sequence is TSCETCHLLKPARSKHCSICKKCVGRMDHHCIFINNCVGANNQRWFILLLL. The helical transmembrane segment at 202–222 threads the bilayer; that stretch reads ILLLLSTAILTLYGGVLGLVI. The Lumenal segment spans residues 223-274; sequence IRAKIQARFPYWTLMPWWTSTQAWNSGDLDFHRWLLLWSWGLQSGVAMGGVT. A helical membrane pass occupies residues 275-295; that stretch reads LLALLTTPLVWGLLGYHLWLV. Residues 296 to 429 lie on the Cytoplasmic side of the membrane; it reads YCGTTTNESM…ERGRNRRRSS (134 aa). Positions 408-421 are enriched in basic and acidic residues; the sequence is GRSPVDEREFGRER. The tract at residues 408–429 is disordered; it reads GRSPVDEREFGRERGRNRRRSS.

Belongs to the DHHC palmitoyltransferase family. SWF1 subfamily.

It localises to the endoplasmic reticulum membrane. The catalysed reaction is L-cysteinyl-[protein] + hexadecanoyl-CoA = S-hexadecanoyl-L-cysteinyl-[protein] + CoA. Palmitoyltransferase that targets several endosomal SNAREs. Palmitoylates the SNAREs at cysteine residues close to the cytoplasmic end of their transmembrane domain. May have a role in the cellular quality control of transmembrane domain-containing proteins. The polypeptide is Palmitoyltransferase SWF1 (swf-1) (Neurospora crassa (strain ATCC 24698 / 74-OR23-1A / CBS 708.71 / DSM 1257 / FGSC 987)).